A 387-amino-acid chain; its full sequence is Natterin-4 (387 aa).

A signal peptide spans 1–18 (MKLLVLLVTLLVLSWTSA). A propeptide spanning residues 19–46 (EDVGDQEILQQHNEDNNHKSELGEAAPQ) is cleaved from the precursor. Positions 31–40 (NEDNNHKSEL) are enriched in basic and acidic residues. The segment at 31–57 (NEDNNHKSELGEAAPQRTDNETSQLGQ) is disordered.

The protein belongs to the natterin family. In terms of processing, contains 4 disulfide bonds. In terms of tissue distribution, expressed by the venom gland.

The protein localises to the secreted. Inhibited by tissue-kallikrein inhibitor TKI and trasylol. Plasma kallikrein inhibitor PKSI527 and classical inhibitors of serine-, metallo-, thiol- or aspartate-peptidases evokes a minor inhibition of the peptide digestion. Its function is as follows. Shows nociceptive, edema-inducing and kininogenase activity with release of kallidin from low molecular weight kininogen. The cleavage occurs at Met-Lys bonds. The chain is Natterin-4 from Thalassophryne nattereri (Copper Joe toadfish).